Here is a 65-residue protein sequence, read N- to C-terminus: Large ribosomal subunit protein bL35 (65 aa).

The protein belongs to the bacterial ribosomal protein bL35 family.

This is Large ribosomal subunit protein bL35 from Clostridium acetobutylicum (strain ATCC 824 / DSM 792 / JCM 1419 / IAM 19013 / LMG 5710 / NBRC 13948 / NRRL B-527 / VKM B-1787 / 2291 / W).